Consider the following 212-residue polypeptide: Inner membrane-spanning protein YciB (212 aa).

Helical transmembrane passes span 19-39 (FYGA…PVAL), 47-67 (AIYL…ALGL), 82-102 (AVIL…FILW), 105-122 (TLVN…PLFG), 147-167 (LAWV…AYTF), and 177-197 (LFGM…YLGL).

It belongs to the YciB family.

It is found in the cell inner membrane. Plays a role in cell envelope biogenesis, maintenance of cell envelope integrity and membrane homeostasis. The chain is Inner membrane-spanning protein YciB from Thioalkalivibrio sulfidiphilus (strain HL-EbGR7).